Here is a 127-residue protein sequence, read N- to C-terminus: Large ribosomal subunit protein bL20 (127 aa).

Belongs to the bacterial ribosomal protein bL20 family.

Functionally, binds directly to 23S ribosomal RNA and is necessary for the in vitro assembly process of the 50S ribosomal subunit. It is not involved in the protein synthesizing functions of that subunit. This chain is Large ribosomal subunit protein bL20, found in Bifidobacterium adolescentis (strain ATCC 15703 / DSM 20083 / NCTC 11814 / E194a).